An 87-amino-acid chain; its full sequence is UPF0250 protein YE3006 (87 aa).

This sequence belongs to the UPF0250 family.

In Yersinia enterocolitica serotype O:8 / biotype 1B (strain NCTC 13174 / 8081), this protein is UPF0250 protein YE3006.